Reading from the N-terminus, the 201-residue chain is 3-isopropylmalate dehydratase small subunit (201 aa).

The protein belongs to the LeuD family. LeuD type 1 subfamily. Heterodimer of LeuC and LeuD.

It catalyses the reaction (2R,3S)-3-isopropylmalate = (2S)-2-isopropylmalate. Its pathway is amino-acid biosynthesis; L-leucine biosynthesis; L-leucine from 3-methyl-2-oxobutanoate: step 2/4. Functionally, catalyzes the isomerization between 2-isopropylmalate and 3-isopropylmalate, via the formation of 2-isopropylmaleate. This chain is 3-isopropylmalate dehydratase small subunit, found in Shewanella sp. (strain MR-7).